The primary structure comprises 397 residues: Tryptophan synthase beta chain 1 (397 aa).

Position 94 is an N6-(pyridoxal phosphate)lysine (K94).

Belongs to the TrpB family. As to quaternary structure, tetramer of two alpha and two beta chains. Pyridoxal 5'-phosphate serves as cofactor.

It carries out the reaction (1S,2R)-1-C-(indol-3-yl)glycerol 3-phosphate + L-serine = D-glyceraldehyde 3-phosphate + L-tryptophan + H2O. It participates in amino-acid biosynthesis; L-tryptophan biosynthesis; L-tryptophan from chorismate: step 5/5. Its function is as follows. The beta subunit is responsible for the synthesis of L-tryptophan from indole and L-serine. This chain is Tryptophan synthase beta chain 1 (trpB1), found in Archaeoglobus fulgidus (strain ATCC 49558 / DSM 4304 / JCM 9628 / NBRC 100126 / VC-16).